The chain runs to 251 residues: UstYa family oxidase phomYb (251 aa).

Residues 1-47 (MDGYSSKKPRSASPSRSSLTEVEEEERDTLLKTVSLEEEDKSGENGP) form a disordered region. A helical transmembrane segment spans residues 58–78 (AIGILMLSNIAFIAAFLTVFV). Residue N135 is glycosylated (N-linked (GlcNAc...) asparagine). Short sequence motifs (HXXHC) lie at residues 160–164 (HQLHC) and 187–191 (HVSHC).

Belongs to the ustYa family.

Its subcellular location is the membrane. Its pathway is mycotoxin biosynthesis. Functionally, ustYa family oxidase; part of the gene cluster that mediates the biosynthesis of the phomopsins, a group of hexapeptide mycotoxins which infects lupins and causes lupinosis disease in livestock. Within the pathway, phomYb is probably involved in the construction of the macrocyclic structure of the phomopsins. The pathway starts with the processing of the precursor phomA by several endopeptidases including kexin proteases as well as the cluster-specific S41 family peptidase phomP1 and the oligopeptidase phomG to produce 10 identical copies of the hexapeptide Tyr-Val-Ile-Pro-Ile-Asp. After being excised from the precursor peptide, the core peptides are cyclized and modified post-translationally by enzymes encoded within the gene cluster. The timing and order of proteolysis of the phomA precursor and PTMs are still unknown. Two tyrosinase-like enzymes, phomQ1 and phomQ2, catalyze the chlorination and hydroxylation of Tyr, respectively. PhomYb, is proposed to be involved in the construction of the macrocyclic structure. The other 4 ustYa family proteins may be involved in PTMs that generate the unique structure of phomopsin A. PhomYa is required for the hydroxylation of C-beta of Tyr. PhomYc, phomYd, and phomYe are responsible for the biosynthesis of 2,3-dehydroisoleucine (dIle), 2,3-dehydroaspartic acid (dAsp), and 3,4-dehydroproline (dPro), respectively. While dIle formation by phomYc is indispensable for the installation of dAsp by phomYd, the order of the other PTMs have not been elucidated yet. Most of the biosynthetic enzymes likely have broad substrate specificity, and thus, there might be a metabolic grid from a precursor to phomopsin A. The enzyme(s) responsible for the biosynthesis of 3,4-dehydrovaline (dVal) have also not been identified yet. Finally, phomM acts as an S-adenosylmethionine-dependent alpha-N-methyltransferase that catalyzes two successive N-methylation reactions, converting N-desmethyl-phomopsin A to phomopsin A and phomopsin A further to an N,N-dimethylated congener called phomopsin E. The chain is UstYa family oxidase phomYb from Diaporthe leptostromiformis (Lupinosis disease fungus).